We begin with the raw amino-acid sequence, 167 residues long: Cell number regulator 3 (167 aa).

Residues 67–84 (GMTSCGTSAALFALIQWL) form a helical membrane-spanning segment.

The protein belongs to the cornifelin family. As to expression, expressed only in pollen.

It is found in the membrane. The protein is Cell number regulator 3 (CNR3) of Zea mays (Maize).